The primary structure comprises 327 residues: GTP 3',8-cyclase (327 aa).

Residues 21–233 form the Radical SAM core domain; the sequence is SYGRRIRKLR…AKIQQKYSLK (213 aa). Arg-30 is a GTP binding site. Residues Cys-37 and Cys-41 each contribute to the [4Fe-4S] cluster site. Tyr-43 contacts S-adenosyl-L-methionine. Cys-44 is a binding site for [4Fe-4S] cluster. Arg-79 contacts GTP. Position 83 (Gly-83) interacts with S-adenosyl-L-methionine. Thr-109 lines the GTP pocket. Ser-133 is an S-adenosyl-L-methionine binding site. Lys-169 lines the GTP pocket. Residue Met-203 coordinates S-adenosyl-L-methionine. Residues Cys-265 and Cys-268 each contribute to the [4Fe-4S] cluster site. Position 270-272 (270-272) interacts with GTP; that stretch reads RWR. [4Fe-4S] cluster is bound at residue Cys-282.

Belongs to the radical SAM superfamily. MoaA family. Monomer and homodimer. [4Fe-4S] cluster serves as cofactor.

It carries out the reaction GTP + AH2 + S-adenosyl-L-methionine = (8S)-3',8-cyclo-7,8-dihydroguanosine 5'-triphosphate + 5'-deoxyadenosine + L-methionine + A + H(+). Its pathway is cofactor biosynthesis; molybdopterin biosynthesis. Functionally, catalyzes the cyclization of GTP to (8S)-3',8-cyclo-7,8-dihydroguanosine 5'-triphosphate. The sequence is that of GTP 3',8-cyclase from Synechocystis sp. (strain ATCC 27184 / PCC 6803 / Kazusa).